A 569-amino-acid chain; its full sequence is Peptide transporter PTR_C (569 aa).

Residues 1–25 show a composition bias toward basic and acidic residues; the sequence is MSQNVDEKVVHDDASVIRSVDRSES. The interval 1–43 is disordered; sequence MSQNVDEKVVHDDASVIRSVDRSESDSYPDSVSPEGAEPSEEE. A helical membrane pass occupies residues 54-74; sequence VPLACWLVAIVELAERFSYYG. Asn98 carries an N-linked (GlcNAc...) asparagine glycan. Helical transmembrane passes span 104 to 124, 134 to 154, and 159 to 179; these read ALSYFWQFWCYVTPIFGAWVA, ISIFCVLYIIGILILFVTSLP, and NTSLGGFITAVIVIGIGTGGV. Asn212 carries an N-linked (GlcNAc...) asparagine glycan. Transmembrane regions (helical) follow at residues 215–235, 245–265, 322–342, 366–386, 398–418, 444–464, 479–499, and 510–530; these read IQNVFMFFYLMINIGSLSVIA, FWAAYLLPLCFFVIALLALFL, ALYACKVFLIYPIYWLVYGQM, IDSITIIIFIPICESIVYPFI, IFWGFMFGAAAMVYAAVLQHF, VALQTPAYFLIAISEILASIT, SFIMSIFLVQNAFGSALGIAL, and WTYTGLAVSCFIAGWVFWFLF.

The protein belongs to the major facilitator superfamily. Proton-dependent oligopeptide transporter (POT/PTR) (TC 2.A.17) family.

Its subcellular location is the cell membrane. The catalysed reaction is a dipeptide(out) + H(+)(out) = a dipeptide(in) + H(+)(in). The enzyme catalyses an L-amino acid tripeptide(out) + H(+)(out) = an L-amino acid tripeptide(in) + H(+)(in). Peptide transporter that exploits the inwardly directed proton motive force to facilitate the cellular uptake of di/tripeptides. Shows strong uptake specificity towards the dipeptides Tyr-Phe and Leu-Gly and the tripeptide Phe-Gly-Gly, when compared to PTR_A and PTR_B. Also able to import peptide-based antifungals such as the peptide-nucleoside drug nikkomycin Z as well as the glucosamine-6-phosphate synthase inhibitor, L-norvalyl-N3-(4-methoxyfumaroyl)-L-2,3-diaminopropionoic acid (Nva-FMDP). This chain is Peptide transporter PTR_C, found in Candidozyma auris (Yeast).